A 122-amino-acid polypeptide reads, in one-letter code: Large ribosomal subunit protein uL18 (122 aa).

It belongs to the universal ribosomal protein uL18 family. In terms of assembly, part of the 50S ribosomal subunit; part of the 5S rRNA/L5/L18/L25 subcomplex. Contacts the 5S and 23S rRNAs.

Functionally, this is one of the proteins that bind and probably mediate the attachment of the 5S RNA into the large ribosomal subunit, where it forms part of the central protuberance. The protein is Large ribosomal subunit protein uL18 of Prochlorococcus marinus (strain AS9601).